The chain runs to 601 residues: ATP-dependent RNA helicase DeaD (601 aa).

A Q motif motif is present at residues 6 to 34; the sequence is STFSFLGLNPFIIKSLSKMGYVKPSPIQA. Residues 37–208 form the Helicase ATP-binding domain; it reads IPLLLEGRDV…KRFMKNPQEI (172 aa). 50 to 57 contributes to the ATP binding site; it reads AQTGSGKT. Positions 156–159 match the DEAD box motif; sequence DEAD. The Helicase C-terminal domain occupies 231–378; it reads KTDALIRFLE…EVQLPKIEVL (148 aa). The span at 564 to 581 shows a compositional bias: basic and acidic residues; that stretch reads SIFNKDKNNKRRFSDNRL. The interval 564–601 is disordered; it reads SIFNKDKNNKRRFSDNRLNKSSSIKNETKSSFFRRKSV. A compositionally biased stretch (polar residues) spans 582 to 594; sequence NKSSSIKNETKSS.

The protein belongs to the DEAD box helicase family. DeaD/CsdA subfamily.

The protein resides in the cytoplasm. It catalyses the reaction ATP + H2O = ADP + phosphate + H(+). DEAD-box RNA helicase involved in various cellular processes at low temperature, including ribosome biogenesis, mRNA degradation and translation initiation. This is ATP-dependent RNA helicase DeaD from Buchnera aphidicola subsp. Schizaphis graminum (strain Sg).